A 612-amino-acid polypeptide reads, in one-letter code: MIQVLLVTICLAVFPYQGSSIILGSGNVNDYEVVYPRKVTALPKGAAQPKYEDTMQYEFKVNGEPVVLHLEKNKGLFSEDYSETHYSPDGREITTYPPVEDHCYYHGRIQNDADSTASISACNGLKGHFKLQGEMYLIEPLELSDSEAHAVFKYENVEKEDEAPKMCGVTQNWESYEPIKKASQLNLTPEQQRYLNTKKYIELVIVADNVMVKKYTSNSTAIRTRIYACVNTLNLIYRAFNIHIALVGIEIWSNKDLINVISASNVTLDLFGNWRRRVLLRRKRHDNAQLLTAIDLDGPTIGLARVGSMCDPKCSTGIVQDHSKLDVMVAVTMAHELAHNLGINHDGNQCNCGGNPCIMSATLNFEPAYRFSDCSRDEHWRYLIDNRPPCILNKPLITDIVSPPVCGNYFVEVGEECDCGLPAHCQNPCCNAATCKLRPGTQCEDGECCEQCQFTSAGTECRAAKSECDIAESCTGQSADCPTDNFQRNGRPCLNNNGYCYNGKCPTLDHQCISFFGSSATVAPDVCFNLNLKGEGNFYCRRENTRIFPCAPQDKKCGRLFCVLGPTGNTISCQSTYSQSDLDIGMVDLGTKCGDGRVCNSTRQCVDVNTAY.

The signal sequence occupies residues 1–20; sequence MIQVLLVTICLAVFPYQGSS. The propeptide occupies 21–189; the sequence is IILGSGNVND…KKASQLNLTP (169 aa). The Peptidase M12B domain occupies 199 to 395; the sequence is KYIELVIVAD…NRPPCILNKP (197 aa). E202 lines the Ca(2+) pocket. The N-linked (GlcNAc...) asparagine glycan is linked to N218. D286 is a binding site for Ca(2+). Cystine bridges form between C310-C390, C350-C374, and C352-C357. Residue H335 coordinates Zn(2+). The active site involves E336. Zn(2+)-binding residues include H339 and H345. 8 residues coordinate Ca(2+): C390, N393, V405, N408, F410, E412, E415, and D418. A Disintegrin domain is found at 403–489; sequence PPVCGNYFVE…DCPTDNFQRN (87 aa). 14 disulfides stabilise this stretch: C406–C435, C417–C430, C419–C425, C429–C452, C443–C449, C448–C474, C461–C481, C468–C500, C493–C505, C512–C562, C527–C573, C540–C550, C557–C599, and C593–C605. A D/ECD-tripeptide motif is present at residues 467 to 469; the sequence is ECD.

Belongs to the venom metalloproteinase (M12B) family. P-III subfamily. It depends on Zn(2+) as a cofactor. In terms of tissue distribution, expressed by the venom gland.

It is found in the secreted. Snake venom metalloproteinase that impairs hemostasis in the envenomed animal. This is Zinc metalloproteinase-disintegrin-like 2a from Crotalus adamanteus (Eastern diamondback rattlesnake).